A 278-amino-acid polypeptide reads, in one-letter code: Orotidine 5'-phosphate decarboxylase (278 aa).

Residues D40, K62–H64, D93–T102, Y229, and R247 each bind substrate. The active-site Proton donor is K95.

Belongs to the OMP decarboxylase family.

The enzyme catalyses orotidine 5'-phosphate + H(+) = UMP + CO2. The protein operates within pyrimidine metabolism; UMP biosynthesis via de novo pathway; UMP from orotate: step 2/2. This Aspergillus fumigatus (strain ATCC MYA-4609 / CBS 101355 / FGSC A1100 / Af293) (Neosartorya fumigata) protein is Orotidine 5'-phosphate decarboxylase (pyrG).